The following is a 232-amino-acid chain: Ubiquinone biosynthesis O-methyltransferase (232 aa).

Residues R36, G55, D76, and M120 each coordinate S-adenosyl-L-methionine.

This sequence belongs to the methyltransferase superfamily. UbiG/COQ3 family.

The catalysed reaction is a 3-demethylubiquinol + S-adenosyl-L-methionine = a ubiquinol + S-adenosyl-L-homocysteine + H(+). It catalyses the reaction a 3-(all-trans-polyprenyl)benzene-1,2-diol + S-adenosyl-L-methionine = a 2-methoxy-6-(all-trans-polyprenyl)phenol + S-adenosyl-L-homocysteine + H(+). Its pathway is cofactor biosynthesis; ubiquinone biosynthesis. In terms of biological role, O-methyltransferase that catalyzes the 2 O-methylation steps in the ubiquinone biosynthetic pathway. In Burkholderia multivorans (strain ATCC 17616 / 249), this protein is Ubiquinone biosynthesis O-methyltransferase.